We begin with the raw amino-acid sequence, 119 residues long: Small ribosomal subunit protein bS16 (119 aa).

The tract at residues 81–119 (GLAKRPARNNPKKAEPGQKAKERAAARAEKAGAGDDAAA) is disordered. Basic and acidic residues predominate over residues 92–113 (KKAEPGQKAKERAAARAEKAGA).

This sequence belongs to the bacterial ribosomal protein bS16 family.

The sequence is that of Small ribosomal subunit protein bS16 from Methylobacterium sp. (strain 4-46).